A 139-amino-acid chain; its full sequence is uncharacterized protein (139 aa).

In terms of domain architecture, VOC spans Gln9 to Ser133.

This is an uncharacterized protein from Bacillus subtilis (strain 168).